A 269-amino-acid polypeptide reads, in one-letter code: MAAAGRFGLLLLIVLWTMVTVVLPASGEGGWKQSRLGTEAAVMEEERCTVERRAHLTYSEFMQHYAFLKPVILQGLTDNSKFRALCSRENLLASFGDNVVRLSTANTYSYQKVDLPFQEYVEQLLHPQDPESLGNDTLYFFGDNNFTEWAPLFQHYRPPPFRLLGTTPAYSFGIAGAGSGVPFHWHGPGFSEVIYGRKRWFLYPPEKTPEFHPNKTTLAWLLEIYPSLAPSARPLECTIQAGEALYFPDRWWHATLNLDTSVFISTFLG.

The N-terminal stretch at 1-24 (MAAAGRFGLLLLIVLWTMVTVVLP) is a signal peptide. Asn-135, Asn-145, and Asn-214 each carry an N-linked (GlcNAc...) asparagine glycan. The region spanning 147–269 (TEWAPLFQHY…TSVFISTFLG (123 aa)) is the JmjC domain.

In terms of assembly, oligomer. Dimer. Interacts with PKM; regulates angiogenesis and metabolism. N-glycosylated.

It is found in the endoplasmic reticulum lumen. Its subcellular location is the cytoplasm. Functionally, functions as a positive regulator of TNF-induced NF-kappaB signaling. Regulates angiogenesis and cellular metabolism through interaction with PKM. This is JmjC domain-containing protein 8 from Rattus norvegicus (Rat).